We begin with the raw amino-acid sequence, 213 residues long: FMN-dependent NADH:quinone oxidoreductase (213 aa).

It belongs to the azoreductase type 1 family. As to quaternary structure, homodimer. It depends on FMN as a cofactor.

It carries out the reaction 2 a quinone + NADH + H(+) = 2 a 1,4-benzosemiquinone + NAD(+). It catalyses the reaction N,N-dimethyl-1,4-phenylenediamine + anthranilate + 2 NAD(+) = 2-(4-dimethylaminophenyl)diazenylbenzoate + 2 NADH + 2 H(+). Its function is as follows. Quinone reductase that provides resistance to thiol-specific stress caused by electrophilic quinones. In terms of biological role, also exhibits azoreductase activity. Catalyzes the reductive cleavage of the azo bond in aromatic azo compounds to the corresponding amines. The sequence is that of FMN-dependent NADH:quinone oxidoreductase from Streptococcus agalactiae serotype III (strain NEM316).